Reading from the N-terminus, the 793-residue chain is Protocadherin beta-7 (793 aa).

Positions 1-26 are cleaved as a signal peptide; the sequence is MEARVERAVQKRQVLFLCVFLGMSWA. The Extracellular portion of the chain corresponds to 27–688; that stretch reads GAEPLRYFVA…DQANLLTVYL (662 aa). Cadherin domains are found at residues 35–133, 138–242, 247–347, 352–451, and 456–561; these read VAEE…APVF, ISLK…APDF, YKVQ…RPEL, LTSP…APAF, and YTLF…SPFV. Asn-169 carries N-linked (GlcNAc...) asparagine glycosylation. N-linked (GlcNAc...) asparagine glycosylation is found at Asn-418 and Asn-436. Asn-567 carries N-linked (GlcNAc...) asparagine glycosylation. One can recognise a Cadherin 6 domain in the interval 568–671; the sequence is SSAPCTEPLP…LVDGFSQPYL (104 aa). Residues 689 to 709 form a helical membrane-spanning segment; it reads VVALASVSSLFLLSVLLFVAV. The Cytoplasmic portion of the chain corresponds to 710–793; the sequence is RLCRRSRAAP…NRPFQNNLGF (84 aa).

Its subcellular location is the cell membrane. Potential calcium-dependent cell-adhesion protein. May be involved in the establishment and maintenance of specific neuronal connections in the brain. In Pan troglodytes (Chimpanzee), this protein is Protocadherin beta-7 (PCDHB7).